Consider the following 2614-residue polypeptide: Talin-B (2614 aa).

The FERM domain occupies 85–369; that stretch reads RPLKVRLMDE…GYIEILMKKR (285 aa). The segment at 393 to 421 is disordered; the sequence is RGQTSQATTSSSLSGYDGNGGREGQYSAP. The segment covering 395–406 has biased composition (low complexity); it reads QTSQATTSSSLS. Coiled-coil stretches lie at residues 1938 to 1965 and 2033 to 2057; these read TQNI…ASGK and NKAI…LVQS. The 242-residue stretch at 2219–2460 folds into the I/LWEQ domain; sequence LLFAAGESLE…SIRKKEYSDQ (242 aa). The disordered stretch occupies residues 2454-2557; that stretch reads KKEYSDQTGN…AAPTAAAPNK (104 aa). The segment covering 2473-2487 has biased composition (polar residues); the sequence is KPTTSISVGITPTKR. Low complexity predominate over residues 2517 to 2537; the sequence is KKPAPSQAPSSPVAPVSAPVS. Residues 2538 to 2548 are compositionally biased toward pro residues; the sequence is KPSPKPAPKPA. The 62-residue stretch at 2553–2614 folds into the HP domain; that stretch reads AAPNKTYTLE…NNIKTKLGLF (62 aa).

It is found in the cytoplasm. Its subcellular location is the cytoskeleton. The protein resides in the cell cortex. In terms of biological role, actin-binding protein required for multicellular morphogenesis. Substrate of pkgB and/or pkbA. This chain is Talin-B (talB), found in Dictyostelium discoideum (Social amoeba).